Reading from the N-terminus, the 142-residue chain is Hemoglobin A subunit alpha-2 (142 aa).

In terms of domain architecture, Globin spans 2-142 (VLTAGDKANV…VAQNLTSKYR (141 aa)). Residue His59 coordinates O2. Residue His88 participates in heme b binding.

It belongs to the globin family. In terms of assembly, tetramer of alpha-1, alpha-2 and two identical beta chains. As to expression, red blood cells.

In terms of biological role, involved in oxygen transport from the lung to the various peripheral tissues. The polypeptide is Hemoglobin A subunit alpha-2 (Aldabrachelys gigantea (Aldabra giant tortoise)).